We begin with the raw amino-acid sequence, 141 residues long: Large ribosomal subunit protein uL16 (141 aa).

The segment covering 1 to 21 (MLMPKRTKFRKQMKGRNRGKS) has biased composition (basic residues). The tract at residues 1 to 22 (MLMPKRTKFRKQMKGRNRGKSF) is disordered.

This sequence belongs to the universal ribosomal protein uL16 family. Part of the 50S ribosomal subunit.

In terms of biological role, binds 23S rRNA and is also seen to make contacts with the A and possibly P site tRNAs. The protein is Large ribosomal subunit protein uL16 of Wolinella succinogenes (strain ATCC 29543 / DSM 1740 / CCUG 13145 / JCM 31913 / LMG 7466 / NCTC 11488 / FDC 602W) (Vibrio succinogenes).